Reading from the N-terminus, the 489-residue chain is Adenosylhomocysteinase (489 aa).

Residues T68, D151, and E213 each contribute to the substrate site. 214–216 serves as a coordination point for NAD(+); the sequence is TTT. Substrate-binding residues include K243 and D247. NAD(+) contacts are provided by residues N248, 277-282, E300, N335, 356-358, and N403; these read GYGDVG and IGH.

It belongs to the adenosylhomocysteinase family. The cofactor is NAD(+).

The protein resides in the cytoplasm. The catalysed reaction is S-adenosyl-L-homocysteine + H2O = L-homocysteine + adenosine. It functions in the pathway amino-acid biosynthesis; L-homocysteine biosynthesis; L-homocysteine from S-adenosyl-L-homocysteine: step 1/1. Its function is as follows. May play a key role in the regulation of the intracellular concentration of adenosylhomocysteine. This chain is Adenosylhomocysteinase, found in Mycobacterium sp. (strain KMS).